Here is a 130-residue protein sequence, read N- to C-terminus: MFDIGFWELVLIFVVGLVVLGPERLPHAIRSVARFVSAAKSMANSVKDELAHELKVQELQENLRKAEQMGMEELSPDLKASVEQLKQAAQSVNRPYADVSAKNEATSSSSSDATHQTEATKTSAANTKSE.

The helical transmembrane segment at 1 to 21 threads the bilayer; sequence MFDIGFWELVLIFVVGLVVLG. The interval 85-130 is disordered; the sequence is LKQAAQSVNRPYADVSAKNEATSSSSSDATHQTEATKTSAANTKSE. The span at 112–130 shows a compositional bias: polar residues; the sequence is DATHQTEATKTSAANTKSE.

The protein belongs to the TatB family. As to quaternary structure, the Tat system comprises two distinct complexes: a TatABC complex, containing multiple copies of TatA, TatB and TatC subunits, and a separate TatA complex, containing only TatA subunits. Substrates initially bind to the TatABC complex, which probably triggers association of the separate TatA complex to form the active translocon.

The protein resides in the cell inner membrane. Part of the twin-arginine translocation (Tat) system that transports large folded proteins containing a characteristic twin-arginine motif in their signal peptide across membranes. Together with TatC, TatB is part of a receptor directly interacting with Tat signal peptides. TatB may form an oligomeric binding site that transiently accommodates folded Tat precursor proteins before their translocation. The sequence is that of Sec-independent protein translocase protein TatB from Vibrio vulnificus (strain CMCP6).